The primary structure comprises 779 residues: Aconitate hydratase, mitochondrial (779 aa).

The N-terminal 28 residues, 1–28 (MIAMDRIARIPIARWTSRAFRVSAAARQ), are a transit peptide targeting the mitochondrion. Substrate is bound by residues Gln-97 and 190-192 (DSH). [4Fe-4S] cluster is bound by residues Cys-383, Cys-446, and Cys-449. Substrate-binding positions include Arg-472, Arg-477, Arg-605, and 668–669 (SR).

It belongs to the aconitase/IPM isomerase family. Monomer. [4Fe-4S] cluster is required as a cofactor.

It is found in the mitochondrion. The enzyme catalyses citrate = D-threo-isocitrate. It participates in carbohydrate metabolism; tricarboxylic acid cycle; isocitrate from oxaloacetate: step 2/2. Catalyzes the isomerization of citrate to isocitrate via cis-aconitate. The polypeptide is Aconitate hydratase, mitochondrial (Gracilaria gracilis (Red alga)).